A 159-amino-acid chain; its full sequence is MGEQKISSLVTGGGASAGPPLGPALGPLGVNIMEVINAINDKTKDFEGMKVPVTVIVDSDTKKYEIEIGIPSAAALIMKEAGIQKGSGASGTEWAGDVTMDAVVKVANTKLENSYASSLKSVAKTIVGTCLALGVKVEGKTPKEITAEINEGKWDEKFQ.

It belongs to the universal ribosomal protein uL11 family. In terms of assembly, part of the ribosomal stalk of the 50S ribosomal subunit. Interacts with L10 and the large rRNA to form the base of the stalk. L10 forms an elongated spine to which L12 dimers bind in a sequential fashion forming a multimeric L10(L12)X complex.

Its function is as follows. Forms part of the ribosomal stalk which helps the ribosome interact with GTP-bound translation factors. This Nitrosopumilus maritimus (strain SCM1) protein is Large ribosomal subunit protein uL11.